The primary structure comprises 2477 residues: Non-reducing polyketide synthase mapC (2477 aa).

The N-terminal acylcarrier protein transacylase domain (SAT) stretch occupies residues 14 to 269 (LLFGPQCSEI…HQQTHREGIQ (256 aa)). The Ketosynthase family 3 (KS3) domain maps to 403-820 (MPPIAITGMA…GSNAALIVRD (418 aa)). Active-site for beta-ketoacyl synthase activity residues include Cys568, His703, and His742. The malonyl-CoA:ACP transacylase (MAT) domain stretch occupies residues 930 to 1233 (LCFGGQNGVT…HRVNLDGSDG (304 aa)). Residue Ser1017 is the For acyl/malonyl transferase activity of the active site. An N-terminal hotdog fold region spans residues 1302–1435 (QERAGLLRKL…GSVSLCNERS (134 aa)). Residues 1302–1612 (QERAGLLRKL…FMSVSIRSLT (311 aa)) form the PKS/mFAS DH domain. Residues 1307-1611 (LLRKLSDGPE…RFMSVSIRSL (305 aa)) are product template (PT) domain. Catalysis depends on His1336, which acts as the Proton acceptor; for dehydratase activity. The interval 1461-1612 (ASNGLKGSTV…FMSVSIRSLT (152 aa)) is C-terminal hotdog fold. Asp1518 acts as the Proton donor; for dehydratase activity in catalysis. Positions 1651-1725 (DSDLVAVQEM…GLTEHIFPGH (75 aa)) constitute a Carrier domain. Position 1685 is an O-(pantetheine 4'-phosphoryl)serine (Ser1685). Residues 1882-2117 (PYALEHDLLQ…GFEWVGWTNN (236 aa)) are methyltransferase (CMeT) domain. Residues Ser2267 and Asp2421 each act as for thioesterase activity in the active site.

The protein localises to the cytoplasm. Its subcellular location is the cytosol. It carries out the reaction 3 malonyl-CoA + acetyl-CoA + S-adenosyl-L-methionine + H(+) = 5-methylorsellinate + S-adenosyl-L-homocysteine + 3 CO2 + 4 CoA. It functions in the pathway secondary metabolite biosynthesis; terpenoid biosynthesis. In terms of biological role, non-reducing polyketide synthase; part of the gene cluster that mediates the biosynthesis of mycophenolic acid (MPA), the first isolated antibiotic natural product in the world obtained from a culture of Penicillium brevicompactum in 1893. MpaC catalyzes the synthesis of 5-methylorsellinic acid (5MOA) via the condensation of 1 acetyl-CoA starter unit with 3 malonyl-CoA units and one methylation step. The first step of the pathway is the synthesis of 5-methylorsellinic acid (5MOA) by the cytosolic polyketide synthase mpaC. 5MOA is then converted to the phthalide compound 5,7-dihydroxy-4,6-dimethylphthalide (DHMP) by the endoplasmic reticulum-bound cytochrome P450 monooxygenase mpaDE. MpaDE first catalyzes hydroxylation of 5-MOA to 4,6-dihydroxy-2-(hydroxymethyl)-3-methylbenzoic acid (DHMB). MpaDE then acts as a lactone synthase that catalyzes the ring closure to convert DHMB into DHMP. The next step is the prenylation of DHMP by the Golgi apparatus-associated prenyltransferase mpaA to yield farnesyl-DHMP (FDHMP). The ER-bound oxygenase mpaB then mediates the oxidative cleavage the C19-C20 double bond in FDHMP to yield FDHMP-3C via a mycophenolic aldehyde intermediate. The O-methyltransferase mpaG catalyzes the methylation of FDHMP-3C to yield MFDHMP-3C. After the cytosolic methylation of FDHMP-3C, MFDHMP-3C enters into peroxisomes probably via free diffusion due to its low molecular weight. Upon a peroxisomal CoA ligation reaction, catalyzed by a beta-oxidation component enzyme acyl-CoA ligase ACL891, MFDHMP-3C-CoA would then be restricted to peroxisomes for the following beta-oxidation pathway steps. The peroxisomal beta-oxidation machinery than converts MFDHMP-3C-CoA into MPA_CoA, via a beta-oxidation chain-shortening process. Finally mpaH acts as a peroxisomal acyl-CoA hydrolase with high substrate specificity toward MPA-CoA to release the final product MPA. This Penicillium roqueforti (strain FM164) protein is Non-reducing polyketide synthase mapC.